Consider the following 100-residue polypeptide: Urease subunit gamma (100 aa).

This sequence belongs to the urease gamma subunit family. As to quaternary structure, heterotrimer of UreA (gamma), UreB (beta) and UreC (alpha) subunits. Three heterotrimers associate to form the active enzyme.

The protein localises to the cytoplasm. The catalysed reaction is urea + 2 H2O + H(+) = hydrogencarbonate + 2 NH4(+). It participates in nitrogen metabolism; urea degradation; CO(2) and NH(3) from urea (urease route): step 1/1. In Edwardsiella ictaluri (strain 93-146), this protein is Urease subunit gamma.